The following is a 144-amino-acid chain: Oxoglutarate dehydrogenase inhibitor (144 aa).

Position 14 is a phosphothreonine (Thr-14). The FHA domain occupies 68-117 (TAAGRHPDSDIFLDDVTVSRRHAEFRRNGDQYEVVDVGSLNGTYVNREPK).

Its subcellular location is the cytoplasm. Functionally, an essential component of the PknG signaling pathway. When unphosphorylated, it inhibits the activity of 2-oxoglutarate dehydrogenase. When phosphorylated it does not inhibit 2-oxoglutarate dehydrogenase. In Corynebacterium jeikeium (strain K411), this protein is Oxoglutarate dehydrogenase inhibitor (odhI).